The chain runs to 55 residues: Large ribosomal subunit protein bL32c (55 aa).

The protein belongs to the bacterial ribosomal protein bL32 family.

The protein localises to the plastid. Its subcellular location is the chloroplast. The protein is Large ribosomal subunit protein bL32c of Nicotiana sylvestris (Wood tobacco).